A 375-amino-acid polypeptide reads, in one-letter code: Alcohol dehydrogenase 1 (375 aa).

Ser-2 carries the N-acetylserine modification. Zn(2+) is bound by residues Cys-47, His-68, Cys-98, Cys-101, Cys-104, Cys-112, and Cys-175. NAD(+)-binding positions include 200-205, Asp-224, and Lys-229; that span reads WSGRVG. An N6-succinyllysine modification is found at Lys-234. 293 to 295 provides a ligand contact to NAD(+); sequence VGV. At Lys-340 the chain carries N6-succinyllysine. Arg-370 contacts NAD(+).

Belongs to the zinc-containing alcohol dehydrogenase family. Class-I subfamily. Homodimer. Requires Zn(2+) as cofactor.

Its subcellular location is the cytoplasm. The enzyme catalyses a primary alcohol + NAD(+) = an aldehyde + NADH + H(+). It carries out the reaction a secondary alcohol + NAD(+) = a ketone + NADH + H(+). The chain is Alcohol dehydrogenase 1 (ADH1) from Geomys bursarius (Plains pocket gopher).